A 406-amino-acid polypeptide reads, in one-letter code: Phosphatidylinositol 5-phosphate 4-kinase type-2 alpha (406 aa).

Residue Ala-2 is modified to N-acetylalanine. Thr-3 carries the phosphothreonine modification. Ser-14 is subject to Phosphoserine. The PIPK domain occupies Ala-33 to Leu-405. The tract at residues Val-59–Asp-65 is required for interaction with PIP5K1A. Residues Lys-89 and Lys-145 each carry the N6-acetyllysine modification. The segment at Gln-288–Pro-329 is disordered. A compositionally biased stretch (acidic residues) spans Glu-289 to Ser-304.

As to quaternary structure, homodimer. Interacts with PIP4K2B; the interaction may regulate localization to the nucleus. Probably interacts with PIP5K1A; the interaction inhibits PIP5K1A kinase activity. In terms of processing, phosphorylated in tyrosines. Phosphorylation is induced by light and increases kinase activity.

The protein localises to the cell membrane. It localises to the nucleus. Its subcellular location is the lysosome. It is found in the cytoplasm. The protein resides in the photoreceptor inner segment. The protein localises to the cell projection. It localises to the cilium. Its subcellular location is the photoreceptor outer segment. It carries out the reaction a 1,2-diacyl-sn-glycero-3-phospho-(1D-myo-inositol-5-phosphate) + ATP = a 1,2-diacyl-sn-glycero-3-phospho-(1D-myo-inositol-4,5-bisphosphate) + ADP + H(+). It catalyses the reaction 1,2-dihexadecanoyl-sn-glycero-3-phospho-(1D-myo-inositol-5-phosphate) + ATP = 1,2-dihexadecanoyl-sn-glycero-3-phospho-(1D-myo-inositol-4,5-bisphosphate) + ADP + H(+). The catalysed reaction is 1,2-dihexadecanoyl-sn-glycero-3-phospho-(1D-myo-inositol-5-phosphate) + GTP = 1,2-dihexadecanoyl-sn-glycero-3-phospho-(1D-myo-inositol-4,5-bisphosphate) + GDP + H(+). With respect to regulation, in rod outer segments, activated by light. Functionally, catalyzes the phosphorylation of phosphatidylinositol 5-phosphate (PtdIns5P) on the fourth hydroxyl of the myo-inositol ring, to form phosphatidylinositol 4,5-bisphosphate (PtdIns(4,5)P2). Has both ATP- and GTP-dependent kinase activities. May exert its function by regulating the levels of PtdIns5P, which functions in the cytosol by increasing AKT activity and in the nucleus signals through ING2. May regulate the pool of cytosolic PtdIns5P in response to the activation of tyrosine phosphorylation. May be involved in thrombopoiesis, and the terminal maturation of megakaryocytes and regulation of their size. May negatively regulate insulin-stimulated glucose uptake by lowering the levels of PtdIns5P. The sequence is that of Phosphatidylinositol 5-phosphate 4-kinase type-2 alpha (PIP4K2A) from Sus scrofa (Pig).